Here is a 213-residue protein sequence, read N- to C-terminus: A-type ATP synthase subunit D (213 aa).

Belongs to the V-ATPase D subunit family. As to quaternary structure, has multiple subunits with at least A(3), B(3), C, D, E, F, H, I and proteolipid K(x).

It is found in the cell membrane. Component of the A-type ATP synthase that produces ATP from ADP in the presence of a proton gradient across the membrane. The sequence is that of A-type ATP synthase subunit D from Saccharolobus islandicus (strain L.S.2.15 / Lassen #1) (Sulfolobus islandicus).